Reading from the N-terminus, the 382-residue chain is 3-ketosteroid-9-alpha-monooxygenase, oxygenase component (382 aa).

The Rieske domain maps to 20-122 (WHCLGLSRTF…TMEKHGQLFV (103 aa)). 4 residues coordinate [2Fe-2S] cluster: Cys61, His63, Cys80, and His83. Residues Asn169, His175, His180, and Asp298 each contribute to the Fe cation site.

Homotrimer. The two-component system 3-ketosteroid-9-alpha-monooxygenase is composed of an oxygenase component KshA and a reductase component KshB. The cofactor is [2Fe-2S] cluster. Fe cation serves as cofactor.

It catalyses the reaction androsta-1,4-diene-3,17-dione + 2 reduced [2Fe-2S]-[ferredoxin] + O2 + 2 H(+) = 9alpha-hydroxyandrosta-1,4-diene-3,17-dione + 2 oxidized [2Fe-2S]-[ferredoxin] + H2O. In vitro, catalyzes the introduction of a 9alpha-hydroxyl moiety into the ring B of 3-ketosteroid substrates such as 1,4-androstadiene-3,17-dione (ADD), 4-androstene-3,17-dione (AD), 4-androstene-17beta-ol-3-one (testosterone), 4-pregnene-3,20-dione (progesterone), 23,24-bisnorcholesta-4-ene-22-oate and 23,24-bisnorcholesta-1,4-diene-22-oate. The polypeptide is 3-ketosteroid-9-alpha-monooxygenase, oxygenase component (Rhodococcus rhodochrous).